The primary structure comprises 394 residues: Probable sugar efflux transporter (394 aa).

Helical transmembrane passes span 15-35, 50-70, 79-99, 109-129, 137-157, 168-188, 209-229, 249-269, 272-292, 299-319, 333-353, and 362-382; these read VLML…PVGL, VGLM…PMML, MLLM…SVAW, IGIA…AIRV, QALS…LPIG, ITFA…LKLL, PALV…YTAY, FLLL…SIYG, FPAT…MCLY, LAVS…GLAV, VAMS…ALLG, and MASV…WCAW.

It belongs to the major facilitator superfamily. SotB (TC 2.A.1.2) family.

It is found in the cell inner membrane. Its function is as follows. Involved in the efflux of sugars. The physiological role may be the reduction of the intracellular concentration of toxic sugars or sugar metabolites. The sequence is that of Probable sugar efflux transporter from Erwinia tasmaniensis (strain DSM 17950 / CFBP 7177 / CIP 109463 / NCPPB 4357 / Et1/99).